The chain runs to 61 residues: Small ribosomal subunit protein uS14B (61 aa).

Zn(2+)-binding residues include C24, C27, C40, and C43.

This sequence belongs to the universal ribosomal protein uS14 family. Zinc-binding uS14 subfamily. Part of the 30S ribosomal subunit. Contacts proteins S3 and S10. Zn(2+) is required as a cofactor.

Functionally, binds 16S rRNA, required for the assembly of 30S particles and may also be responsible for determining the conformation of the 16S rRNA at the A site. The sequence is that of Small ribosomal subunit protein uS14B from Pediococcus pentosaceus (strain ATCC 25745 / CCUG 21536 / LMG 10740 / 183-1w).